A 113-amino-acid chain; its full sequence is N-alpha-acetyltransferase 38, NatC auxiliary subunit (113 aa).

The disordered stretch occupies residues 1–29 (MAAVLEENGCSRQSSPGAGDSDAEAGDTA). A Sm domain is found at 28–106 (TARHKLESLL…IVSIQVELES (79 aa)).

Belongs to the snRNP Sm proteins family. As to quaternary structure, component of the N-terminal acetyltransferase C (NatC) complex.

It localises to the cytoplasm. The protein resides in the nucleus. In terms of biological role, auxillary component of the N-terminal acetyltransferase C (NatC) complex which catalyzes acetylation of N-terminal methionine residues. N-terminal acetylation protects proteins from ubiquitination and degradation by the N-end rule pathway. The chain is N-alpha-acetyltransferase 38, NatC auxiliary subunit (naa38) from Xenopus tropicalis (Western clawed frog).